Reading from the N-terminus, the 338-residue chain is tRNA N6-adenosine threonylcarbamoyltransferase (338 aa).

Histidine 111 and histidine 115 together coordinate Fe cation. Residues 134–138 (LVSGG), aspartate 167, glycine 180, and asparagine 272 contribute to the substrate site. Aspartate 300 is a binding site for Fe cation.

Belongs to the KAE1 / TsaD family. It depends on Fe(2+) as a cofactor.

Its subcellular location is the cytoplasm. It carries out the reaction L-threonylcarbamoyladenylate + adenosine(37) in tRNA = N(6)-L-threonylcarbamoyladenosine(37) in tRNA + AMP + H(+). In terms of biological role, required for the formation of a threonylcarbamoyl group on adenosine at position 37 (t(6)A37) in tRNAs that read codons beginning with adenine. Is involved in the transfer of the threonylcarbamoyl moiety of threonylcarbamoyl-AMP (TC-AMP) to the N6 group of A37, together with TsaE and TsaB. TsaD likely plays a direct catalytic role in this reaction. The protein is tRNA N6-adenosine threonylcarbamoyltransferase of Vibrio parahaemolyticus serotype O3:K6 (strain RIMD 2210633).